Reading from the N-terminus, the 162-residue chain is Interleukin-15 (162 aa).

Residues 1–29 form the signal peptide; it reads MRISKPYLRSTSIQCYLCLLLNSHFLAEA. The propeptide occupies 30-48; sequence GIHVFIFGCISAGLPKTEA. Disulfide bonds link Cys83–Cys133 and Cys90–Cys136. N-linked (GlcNAc...) asparagine glycans are attached at residues Asn108, Asn119, Asn127, and Asn143.

This sequence belongs to the IL-15/IL-21 family. In terms of tissue distribution, expressed in many tissues including heart, spleen, lung, liver, muscle and kidney (at mRNA level). Expressed in many tissues including heart, spleen, lung, liver, muscle and kidney (at protein level).

It localises to the secreted. In terms of biological role, cytokine that plays a major role in the development of inflammatory and protective immune responses to microbial invaders and parasites by modulating immune cells of both the innate and adaptive immune systems. Stimulates the proliferation of natural killer cells, T-cells and B-cells and promotes the secretion of several cytokines. In monocytes, induces the production of IL8 and monocyte chemotactic protein 1/CCL2, two chemokines that attract neutrophils and monocytes respectively to sites of infection. Unlike most cytokines, which are secreted in soluble form, IL15 is expressed in association with its high affinity IL15RA on the surface of IL15-producing cells and delivers signals to target cells that express IL2RB and IL2RG receptor subunits. Binding to its receptor triggers the phosphorylation of JAK1 and JAK3 and the recruitment and subsequent phosphorylation of signal transducer and activator of transcription-3/STAT3 and STAT5. In mast cells, induces the rapid tyrosine phosphorylation of STAT6 and thereby controls mast cell survival and release of cytokines such as IL4. This is Interleukin-15 (IL15) from Oryctolagus cuniculus (Rabbit).